Here is a 148-residue protein sequence, read N- to C-terminus: UPF0178 protein Pcar_2632 (148 aa).

The protein belongs to the UPF0178 family.

The protein is UPF0178 protein Pcar_2632 of Syntrophotalea carbinolica (strain DSM 2380 / NBRC 103641 / GraBd1) (Pelobacter carbinolicus).